The primary structure comprises 196 residues: UMP-CMP kinase (196 aa).

Residue glycine 13–threonine 18 coordinates ATP. Residues serine 33–valine 63 form an NMP region. A ribonucleoside 5'-phosphate contacts are provided by residues arginine 39, arginine 61–valine 63, and glycine 93–arginine 96. Asparagine 100 contributes to the CMP binding site. The LID stretch occupies residues glutamate 133 to aspartate 143. Arginine 134 is an ATP binding site. Arginine 140 and arginine 151 together coordinate a ribonucleoside 5'-phosphate. Lysine 179 lines the ATP pocket.

It belongs to the adenylate kinase family. UMP-CMP kinase subfamily. As to quaternary structure, monomer. Mg(2+) is required as a cofactor.

The protein resides in the cytoplasm. It is found in the nucleus. The enzyme catalyses CMP + ATP = CDP + ADP. It catalyses the reaction dCMP + ATP = dCDP + ADP. It carries out the reaction UMP + ATP = UDP + ADP. The catalysed reaction is a 2'-deoxyribonucleoside 5'-diphosphate + ATP = a 2'-deoxyribonucleoside 5'-triphosphate + ADP. The enzyme catalyses a ribonucleoside 5'-diphosphate + ATP = a ribonucleoside 5'-triphosphate + ADP. Functionally, catalyzes the phosphorylation of pyrimidine nucleoside monophosphates at the expense of ATP. Plays an important role in de novo pyrimidine nucleotide biosynthesis. Has preference for UMP and CMP as phosphate acceptors. Also displays broad nucleoside diphosphate kinase activity. The protein is UMP-CMP kinase (cmpk1) of Xenopus tropicalis (Western clawed frog).